The following is a 307-amino-acid chain: 4-hydroxy-tetrahydrodipicolinate synthase (307 aa).

T57 contacts pyruvate. The active-site Proton donor/acceptor is Y145. K173 (schiff-base intermediate with substrate) is an active-site residue. V215 is a binding site for pyruvate.

Belongs to the DapA family. As to quaternary structure, homotetramer; dimer of dimers.

It localises to the cytoplasm. It carries out the reaction L-aspartate 4-semialdehyde + pyruvate = (2S,4S)-4-hydroxy-2,3,4,5-tetrahydrodipicolinate + H2O + H(+). Its pathway is amino-acid biosynthesis; L-lysine biosynthesis via DAP pathway; (S)-tetrahydrodipicolinate from L-aspartate: step 3/4. In terms of biological role, catalyzes the condensation of (S)-aspartate-beta-semialdehyde [(S)-ASA] and pyruvate to 4-hydroxy-tetrahydrodipicolinate (HTPA). The chain is 4-hydroxy-tetrahydrodipicolinate synthase from Leptospira interrogans serogroup Icterohaemorrhagiae serovar copenhageni (strain Fiocruz L1-130).